The following is a 202-amino-acid chain: Pycsar effector protein PtPycTM (202 aa).

3 helical membrane-spanning segments follow: residues Gly-60–Ile-80, Leu-85–Ala-105, and Ile-181–Gly-201.

Its subcellular location is the cell membrane. In terms of biological role, pycsar (pyrimidine cyclase system for antiphage resistance) provides immunity against bacteriophage. The pyrimidine cyclase (PycC) synthesizes cyclic nucleotides in response to infection; these serve as specific second messenger signals. The signals activate the adjacent effector, leading to bacterial cell death and abortive phage infection. A clade D Pycsar system. Its function is as follows. The effector gene of a two-gene Pycsar system. Expression of this and adjacent uridylate cyclase PtPycC (AC A0A4V2JTK3) probably confers resistance to bacteriophage. The genes are probably only expressed in response to bacteriophage infection. Probably only responds to cUMP (produced by its cognate NTP cyclase), acts by impairing membrane integrity. This Propioniciclava tarda protein is Pycsar effector protein PtPycTM.